Consider the following 184-residue polypeptide: Ribosome-recycling factor (184 aa).

This sequence belongs to the RRF family.

It localises to the cytoplasm. Responsible for the release of ribosomes from messenger RNA at the termination of protein biosynthesis. May increase the efficiency of translation by recycling ribosomes from one round of translation to another. In Borrelia garinii subsp. bavariensis (strain ATCC BAA-2496 / DSM 23469 / PBi) (Borreliella bavariensis), this protein is Ribosome-recycling factor.